The chain runs to 375 residues: tRNA (guanine(26)-N(2))-dimethyltransferase (375 aa).

A Trm1 methyltransferase domain is found at 2–368 (KYITEGNTKL…AKLIDIVEFI (367 aa)). The S-adenosyl-L-methionine site is built by R35, R66, D89, D116, and A117.

It belongs to the class I-like SAM-binding methyltransferase superfamily. Trm1 family.

It catalyses the reaction guanosine(26) in tRNA + 2 S-adenosyl-L-methionine = N(2)-dimethylguanosine(26) in tRNA + 2 S-adenosyl-L-homocysteine + 2 H(+). Dimethylates a single guanine residue at position 26 of a number of tRNAs using S-adenosyl-L-methionine as donor of the methyl groups. The polypeptide is tRNA (guanine(26)-N(2))-dimethyltransferase (Methanococcus aeolicus (strain ATCC BAA-1280 / DSM 17508 / OCM 812 / Nankai-3)).